The primary structure comprises 267 residues: Phosphonoacetaldehyde hydrolase (267 aa).

D10 (nucleophile) is an active-site residue. Residues D10 and A12 each contribute to the Mg(2+) site. Residue K51 is the Schiff-base intermediate with substrate of the active site. Mg(2+) is bound at residue D184.

Belongs to the HAD-like hydrolase superfamily. PhnX family. In terms of assembly, homodimer. It depends on Mg(2+) as a cofactor.

It catalyses the reaction phosphonoacetaldehyde + H2O = acetaldehyde + phosphate + H(+). Involved in phosphonate degradation. The chain is Phosphonoacetaldehyde hydrolase from Paraburkholderia phytofirmans (strain DSM 17436 / LMG 22146 / PsJN) (Burkholderia phytofirmans).